Consider the following 249-residue polypeptide: 2-C-methyl-D-erythritol 4-phosphate cytidylyltransferase (249 aa).

Belongs to the IspD/TarI cytidylyltransferase family. IspD subfamily.

It carries out the reaction 2-C-methyl-D-erythritol 4-phosphate + CTP + H(+) = 4-CDP-2-C-methyl-D-erythritol + diphosphate. It functions in the pathway isoprenoid biosynthesis; isopentenyl diphosphate biosynthesis via DXP pathway; isopentenyl diphosphate from 1-deoxy-D-xylulose 5-phosphate: step 2/6. Catalyzes the formation of 4-diphosphocytidyl-2-C-methyl-D-erythritol from CTP and 2-C-methyl-D-erythritol 4-phosphate (MEP). This is 2-C-methyl-D-erythritol 4-phosphate cytidylyltransferase from Shewanella oneidensis (strain ATCC 700550 / JCM 31522 / CIP 106686 / LMG 19005 / NCIMB 14063 / MR-1).